A 426-amino-acid polypeptide reads, in one-letter code: uncharacterized protein (426 aa).

It to M.leprae L518_C2_147 and M.tuberculosis Rv1524.

This is an uncharacterized protein from Mycobacterium tuberculosis (strain CDC 1551 / Oshkosh).